The sequence spans 512 residues: Serine/threonine-protein kinase BSK1 (512 aa).

Gly-2 carries the N-myristoyl glycine lipid modification. The interval 8 to 48 (FSGDNPLGKDGVQPQPLSQNNHGGATTADNGGSGGASGVGG) is disordered. The segment covering 38 to 48 (GGSGGASGVGG) has biased composition (gly residues). The Protein kinase domain occupies 76–331 (DNIVSESGEK…DLVATLAPLQ (256 aa)). Residues 82–90 (SGEKAPNLV) and Lys-104 contribute to the ATP site. Residue Asp-198 is the Proton acceptor of the active site. Ser-230 carries the post-translational modification Phosphoserine. A coiled-coil region spans residues 483-508 (AKLNMNTDAADMLNEAAQLEEKRQRG).

It belongs to the protein kinase superfamily. Ser/Thr protein kinase family. As to quaternary structure, interacts with BRI1. Interacts with ASK7/BIN2, BSK5, BSK6, BSK8 and BSK11. Interacts with FLS2. Post-translationally, phosphorylated at Ser-230 by BRI1 upon brassinolide (BL) treatment. Phosphorylation at Ser-230 weakens the interaction between BSK1 and BRI1. Phosphorylated by ASK7/BIN2 and ASK9/BIL2.

The protein localises to the cell membrane. The catalysed reaction is L-seryl-[protein] + ATP = O-phospho-L-seryl-[protein] + ADP + H(+). The enzyme catalyses L-threonyl-[protein] + ATP = O-phospho-L-threonyl-[protein] + ADP + H(+). Its function is as follows. Serine/threonine kinase that acts as a positive regulator of brassinosteroid (BR) signaling downstream of the receptor kinase BRI1. Mediates signal transduction from BRI1 by functioning as substrate of BRI1. Functions as a positive regulator of plant immunity. May be involved in the regulation of pattern-triggered immunity (PTI) downstream of the flagellin receptor FLS2. Possesses kinase activity in vitro. Kinase activity is required for its function in innate immunity. This chain is Serine/threonine-protein kinase BSK1, found in Arabidopsis thaliana (Mouse-ear cress).